The primary structure comprises 260 residues: Dehydrogenase/reductase SDR family member 4 (260 aa).

18–42 (IVTASTDGIGLAIARRLAQDGAHVV) is a binding site for NADP(+). At Lys74 the chain carries N6-acetyllysine; alternate. Lys74 is subject to N6-succinyllysine; alternate. Residue Ser151 coordinates substrate. Catalysis depends on Tyr164, which acts as the Proton acceptor. Residue Lys168 coordinates NADP(+). Lys198 is modified (N6-acetyllysine; alternate). Lys198 bears the N6-succinyllysine; alternate mark. Position 202 is a phosphoserine (Ser202). Residue Lys209 is modified to N6-succinyllysine. Positions 258–260 (SRL) match the Peroxisomal targeting signal motif.

It belongs to the short-chain dehydrogenases/reductases (SDR) family. In terms of assembly, homotetramer. In terms of tissue distribution, detected in liver and kidney. Detected at lower levels in heart, lung, spleen, small intestine, testis, brain and stomach.

The protein localises to the peroxisome. The enzyme catalyses a secondary alcohol + NADP(+) = a ketone + NADPH + H(+). The catalysed reaction is 3alpha-hydroxy-5beta-pregnan-20-one + NADP(+) = 5beta-pregnan-3,20-dione + NADPH + H(+). It carries out the reaction 5beta-dihydrotestosterone + NADPH + H(+) = 5beta-androstane-3alpha,17beta-diol + NADP(+). It catalyses the reaction all-trans-retinol + NADP(+) = all-trans-retinal + NADPH + H(+). The enzyme catalyses isatin + NADPH + H(+) = 3-hydroxyindolin-2-one + NADP(+). Inhibited by flavonoids (kaempferol, quercetin, quercitrin, genistein), myristic acid, pyrazole, barbital, phenobarbital and CuSO4. In terms of biological role, NADPH-dependent oxidoreductase which catalyzes the reduction of a variety of compounds bearing carbonyl groups including ketosteroids, alpha-dicarbonyl compounds, aldehydes, aromatic ketones and quinones. Reduces all-trans-retinal and 9-cis retinal. Reduces 3-ketosteroids and benzil into 3alpha-hydroxysteroids and S-benzoin, respectively, in contrast to the stereoselectivity of primates DHRS4s which produce 3beta-hydroxysteroids and R-benzoin. In the reverse reaction, catalyze the NADP-dependent oxidation of 3alpha-hydroxysteroids and alcohol, but with much lower efficiency. Involved in the metabolism of 3alpha-hydroxysteroids, retinoid, isatin and xenobiotic carbonyl compounds. In Oryctolagus cuniculus (Rabbit), this protein is Dehydrogenase/reductase SDR family member 4 (DHRS4).